The sequence spans 124 residues: Desulfoferrodoxin homolog (124 aa).

Residues Cys10, Cys13, Cys29, Cys30, His49, His69, His75, Cys117, and His120 each coordinate Fe cation.

It belongs to the desulfoferrodoxin family. Requires Fe(3+) as cofactor. Cu(2+) is required as a cofactor.

The sequence is that of Desulfoferrodoxin homolog from Methanothermobacter thermautotrophicus (strain ATCC 29096 / DSM 1053 / JCM 10044 / NBRC 100330 / Delta H) (Methanobacterium thermoautotrophicum).